The following is a 394-amino-acid chain: Proliferation-associated protein 2G4 (394 aa).

The residue at position 2 (Ser2) is an N-acetylserine. Ser2 bears the Phosphoserine mark. A necessary for nucleolar localization region spans residues 2-48 (SGEDEQQEQTIAEDLVVTKYKMGGDIANRVLRSLVEASSSGVSVLSL). Residues 46 to 54 (LSLCEKGDA) are RNA-binding. Lys298 participates in a covalent cross-link: Glycyl lysine isopeptide (Lys-Gly) (interchain with G-Cter in SUMO2). Residues 301 to 394 (LLQPFNVLYE…ETLEENGAGD (94 aa)) form a necessary for nucleolar localization region. Ser335 carries the phosphoserine modification. The disordered stretch occupies residues 358-394 (LQSSASRKTQKKKKKKASKTVENATSGETLEENGAGD). Ser361 is subject to Phosphoserine; by PKC/PRKCD. The interval 361-375 (SASRKTQKKKKKKAS) is interaction with RNA. Residues 365–375 (KTQKKKKKKAS) show a composition bias toward basic residues. Residues Thr366 and Thr386 each carry the phosphothreonine modification.

Belongs to the peptidase M24 family. Isoform 2 interacts with the cytoplasmic domain of non-phosphorylated ERBB3; the interaction requires PKC activity. Interacts with AR. Treatment with HRG leads to dissociation from ERBB3 and increases association with AR. Interacts with nucleolin/NCL. Component of a ribonucleoprotein complex containing at least PA2G4, NCL, TOP1, PABPC2, RPLP0, acetylated histone H1 (HIST1H1A or H1F1), histone H1 2/4, RPL4, RPL8, RPL15, RPL18, RPL18A, RPL21, RPL11, RPL12, RPL28, RPL27, RPLP2 and RPL24. Interacts with HDAC2. Interacts with RB1; the interaction is enhanced upon PA2G4 dephosphorylation. Interacts with AKT1. Isoform 1 and isoform 2 interact with RNF20. Isoform 2 interacts with HUWE1. Interacts with DNAJC21. Post-translationally, phosphorylated on serine and threonine residues. Phosphorylation is enhanced by HRG treatment. Basal phosphorylation is PKC-dependent and HRG-induced phosphorylation is predominantly PKC-independent. Phosphorylation at Ser-361 by PKC/PRKCD regulates its nucleolar localization. In terms of processing, isoform 2 is polyubiquitinated, leading to proteasomal degradation and phosphorylation by PKC/PRKCD enhances polyubiquitination. As to expression, widely expressed.

Its subcellular location is the cytoplasm. The protein localises to the nucleus. The protein resides in the nucleolus. May play a role in a ERBB3-regulated signal transduction pathway. Seems be involved in growth regulation. Acts a corepressor of the androgen receptor (AR) and is regulated by the ERBB3 ligand neuregulin-1/heregulin (HRG). Inhibits transcription of some E2F1-regulated promoters, probably by recruiting histone acetylase (HAT) activity. Binds RNA. Associates with 28S, 18S and 5.8S mature rRNAs, several rRNA precursors and probably U3 small nucleolar RNA. May be involved in regulation of intermediate and late steps of rRNA processing. May be involved in ribosome assembly. Mediates cap-independent translation of specific viral IRESs (internal ribosomal entry site). Together with PTBP1 is required for the translation initiation on the foot-and-mouth disease virus (FMDV) IRES. Regulates cell proliferation, differentiation, and survival. Isoform 1 suppresses apoptosis whereas isoform 2 promotes cell differentiation. This chain is Proliferation-associated protein 2G4 (Pa2g4), found in Mus musculus (Mouse).